Reading from the N-terminus, the 281-residue chain is NADPH-dependent 7-cyano-7-deazaguanine reductase (281 aa).

87–89 provides a ligand contact to substrate; that stretch reads VES. 89–90 is an NADPH binding site; the sequence is SK. Cys188 acts as the Thioimide intermediate in catalysis. Residue Asp195 is the Proton donor of the active site. 227-228 lines the substrate pocket; sequence HE. Residue 256–257 participates in NADPH binding; that stretch reads RG.

It belongs to the GTP cyclohydrolase I family. QueF type 2 subfamily. Homodimer.

The protein resides in the cytoplasm. The catalysed reaction is 7-aminomethyl-7-carbaguanine + 2 NADP(+) = 7-cyano-7-deazaguanine + 2 NADPH + 3 H(+). Its pathway is tRNA modification; tRNA-queuosine biosynthesis. In terms of biological role, catalyzes the NADPH-dependent reduction of 7-cyano-7-deazaguanine (preQ0) to 7-aminomethyl-7-deazaguanine (preQ1). The polypeptide is NADPH-dependent 7-cyano-7-deazaguanine reductase (Aliivibrio fischeri (strain MJ11) (Vibrio fischeri)).